The primary structure comprises 1698 residues: Bromodomain adjacent to zinc finger domain protein 2A (1698 aa).

Disordered stretches follow at residues 240-262 (QSTP…QLPS) and 352-387 (VMQE…MTIE). Polar residues predominate over residues 377–387 (ENVSQDEMTIE). Residues 418–489 (IATPEQVCFP…EHFSFSPRMP (72 aa)) enclose the MBD domain. Disordered regions lie at residues 524–550 (RGRP…PPKV) and 610–653 (EKEE…DRKL). A compositionally biased stretch (basic and acidic residues) spans 528–540 (RNLEKAKAKEQKA). The a.T hook 1 DNA-binding region spans 541–553 (KRGRGRPPKVKMI). Residues 579-638 (VQLCKLKKKMRRKARNQEAKLEAAKKLKEIKEKEEKKQKIQKAKNQEKAKNQEKKRTRRQ) adopt a coiled-coil conformation. Positions 610–632 (EKEEKKQKIQKAKNQEKAKNQEK) are enriched in basic and acidic residues. The region spanning 701–766 (SCAFSDCLTT…LQAAMINPGL (66 aa)) is the DDT domain. Disordered stretches follow at residues 884–905 (ITTT…NDEL), 1013–1063 (SFGS…PLTN), 1088–1110 (TVLT…SEAT), and 1123–1149 (TPCR…TAAT). Positions 890–900 (SLRRRSERNAE) are enriched in basic and acidic residues. Polar residues-rich tracts occupy residues 1023-1040 (HPRN…SCHC) and 1051-1063 (VTDQ…PLTN). Positions 1091 to 1108 (TPESSPPHSESTPIISSE) are enriched in low complexity. The span at 1124–1149 (PCRNHNQGLSTHSSNRLSPPSPTAAT) shows a compositional bias: polar residues. The segment at residues 1204–1216 (EKRRGRRPSKLLK) is a DNA-binding region (a.T hook 3). The PHD-type zinc finger occupies 1476–1526 (KVTCLYCRKGDNDELLLLCDSCDRGCHTYCHRPRMNEIPEGDWFCPTCISL). A disordered region spans residues 1549–1587 (FTEDSPSKPSRRREHPTASQFSPGESPASKKRRMGTRSQ). Positions 1585–1689 (RSQSPDLTFC…KFYDARWEEF (105 aa)) constitute a Bromo domain.

The protein belongs to the WAL family. In terms of assembly, component of the NoRC complex, at least composed of SMARCA5/SNF2H and BAZ2A/TIP5.

It is found in the nucleus. The protein localises to the nucleolus. Functionally, essential component of the NoRC (nucleolar remodeling complex) complex, a complex that mediates silencing of a fraction of rDNA by recruiting histone-modifying enzymes and DNA methyltransferases, leading to heterochromatin formation and transcriptional silencing. In the complex, it plays a central role by being recruited to rDNA and by targeting chromatin modifying enzymes such as HDAC1, leading to repress RNA polymerase I transcription. Recruited to rDNA via its interaction with TTF1 and its ability to recognize and bind histone H4 acetylated on 'Lys-16' (H4K16ac), leading to deacetylation of H4K5ac, H4K8ac, H4K12ac but not H4K16ac. Specifically binds pRNAs, 150-250 nucleotide RNAs that are complementary in sequence to the rDNA promoter; pRNA-binding is required for heterochromatin formation and rDNA silencing. The sequence is that of Bromodomain adjacent to zinc finger domain protein 2A (baz2a) from Xenopus laevis (African clawed frog).